We begin with the raw amino-acid sequence, 687 residues long: Adhesion G-protein coupled receptor G1 (687 aa).

The signal sequence occupies residues 1 to 25 (MTAQSLLQMTLFLLSLLFLVQGAHG). Residue 26 to 33 (RGHREDFR) participates in heparin binding. Residues 26-402 (RGHREDFRFC…VEVDAVHKHY (377 aa)) lie on the Extracellular side of the membrane. Intrachain disulfides connect C35–C91 and C121–C177. 3 N-linked (GlcNAc...) asparagine glycosylation sites follow: N39, N148, and N171. 190–200 (LKHPQKASRRP) contacts heparin. One can recognise a GAIN-B domain in the interval 224 to 395 (DTVSFEEDRI…AVLMVSSVEV (172 aa)). N-linked (GlcNAc...) asparagine glycosylation is found at N234, N303, N324, and N341. Cystine bridges form between C346-C377 and C366-C379. The GPS stretch occupies residues 346-395 (CVFWVEDPTLSSPGHWSSAGCETVRRETQTSCFCNHLTYFAVLMVSSVEV). A stachel region spans residues 384-397 (YFAVLMVSSVEVDA). A helical transmembrane segment spans residues 403-423 (LSLLSYVGCVISALACVVTIA). Residues 424-442 (AYLCSRRKPRDYTIKVHMN) lie on the Cytoplasmic side of the membrane. Residues 443-463 (LLLAVFLLDMSFLLSEPVALT) form a helical membrane-spanning segment. Residues 464–470 (GSEAGCR) lie on the Extracellular side of the membrane. A helical transmembrane segment spans residues 471-491 (AGAIFLHFSLLACLSWMGLEG). Residues 492 to 512 (YNLYRLVVEVFGTYVPGYLLK) lie on the Cytoplasmic side of the membrane. Residues 513 to 533 (LSAMGWGFPIFLVTLVALVDV) traverse the membrane as a helical segment. Over 534–570 (DNYGPIILAVHRTPESVIYPSMCWIRDSLVSYVTNLG) the chain is Extracellular. A helical membrane pass occupies residues 571-591 (LFSLVFLFNMAMLGTMVVQIL). The Cytoplasmic segment spans residues 592–603 (RLRPHTQKWSHV). Residues 604-624 (LTLLGLSLVLGLPWALIFFSF) form a helical membrane-spanning segment. At 625 to 630 (ASGTFQ) the chain is on the extracellular side. Residues 631 to 651 (LVVLYLFSIITSFQGFLIFIW) traverse the membrane as a helical segment. Over 652 to 687 (YWSMRLQARGGPSPLKSNSDSARLPISSGSTSSSRI) the chain is Cytoplasmic. The tract at residues 664-687 (SPLKSNSDSARLPISSGSTSSSRI) is disordered. The segment covering 678-687 (SSGSTSSSRI) has biased composition (low complexity).

It belongs to the G-protein coupled receptor 2 family. LN-TM7 subfamily. In terms of assembly, heterodimer of 2 chains generated by proteolytic processing; the large extracellular N-terminal fragment (ADGRG1 NT) and the membrane-bound C-terminal fragment (ADGRG1-CT) predominantly remain associated and non-covalently linked. ADGRG1 NT self-associates in a trans-trans manner; the homophilic interaction enhances receptor signaling. Interacts with TGM2. Interacts with heparin; leading to the reduction of ADGRG1 shedding. Interacts with COL3A1. Part of a GPCR-tetraspanin complex at least consisting of ADGRG1, CD81, eventually CD9, and GNA11 in which CD81 is enhancing the association of ADGRG1 with GNA11. In terms of processing, autoproteolytically cleaved into 2 fragments; the large extracellular N-terminal fragment (ADGRG1 NT) and the membrane-bound C-terminal fragment (ADGRG1 CT) predominantly remain associated and non-covalently linked. Shedding to yield the secreted ADGRG1 N-terminal fragment seems to involve metalloprotease(s). Ubiquitinated. Undergoes polyubiquitination upon activation.

The protein resides in the cell membrane. Its subcellular location is the secreted. It is found in the membrane raft. With respect to regulation, forms a heterodimer of 2 chains generated by proteolytic processing that remain associated through non-covalent interactions mediated by the GAIN-B domain. In the inactivated receptor, the Stachel sequence (also named stalk) is embedded in the GAIN-B domain, where it adopts a beta-strand conformation. On activation, the Stachel moves into the 7 transmembrane region and adopts a twisted hook-shaped configuration that forms contacts within the receptor, leading to coupling of a G-alpha protein, which activates signaling. The cleaved GAIN-B and N-terminal domains can then dissociate from the rest of the receptor. Functionally, adhesion G-protein coupled receptor (aGPCR) for steroid hormone 17alpha-hydroxypregnenolone (17-OH), which is involved in cell adhesion and cell-cell interactions. Ligand binding causes a conformation change that triggers signaling via guanine nucleotide-binding proteins (G proteins) and modulates the activity of downstream effectors, such as RhoA pathway. ADGRG1 is coupled to G(12) and/or G(13) G proteins (GNA12 and GNA13, respectively) and mediates the activation Rho small GTPases. Acts as a potent suppressor of ferroptosis: binding to 17-OH-binding initiates signaling that down-regulates CD36 and alleviates ferroptosis-induced liver injury. Ligand-binding also induces cell adhesion activity via association with proteins such as collagen III/COL3A1 and TGM2. Mediates cell matrix adhesion in developing neurons and hematopoietic stem cells. Involved in cortical development, specifically in maintenance of the pial basement membrane integrity and in cortical lamination: association with COL3A1 in the developing brain inhibits neuronal migration via activation of the RhoA pathway. Together with TGM2, acts as a regulator of myelination and myelin repair in oligodendrocyte precursor cells. Acts as a hemostatic sensor of shear force: G protein-coupled receptor signaling is activated in response to shear force in platelets, promoting G(13) G protein signaling, and platelet shape change and aggregation in a COL3A1-dependent manner. Acts as an inhibitor of VEGFA production thereby inhibiting angiogenesis through a signaling pathway mediated by PRKCA. Plays a role in the maintenance of hematopoietic stem cells in bone marrow niche. Plays an essential role in testis development. The protein is Adhesion G-protein coupled receptor G1 (ADGRG1) of Pongo pygmaeus (Bornean orangutan).